Here is a 151-residue protein sequence, read N- to C-terminus: RNA polymerase-binding transcription factor DksA (151 aa).

Positions 114, 117, 135, and 138 each coordinate Zn(2+). Residues 114-138 (CNSCSVEIGIRRLEARPTADLCIDC) form a dksA C4-type zinc finger.

The protein belongs to the DksA family. In terms of assembly, interacts directly with the RNA polymerase.

It localises to the cytoplasm. Functionally, transcription factor that acts by binding directly to the RNA polymerase (RNAP). Required for negative regulation of rRNA expression and positive regulation of several amino acid biosynthesis promoters. Also required for regulation of fis expression. This Buchnera aphidicola subsp. Acyrthosiphon pisum (strain APS) (Acyrthosiphon pisum symbiotic bacterium) protein is RNA polymerase-binding transcription factor DksA.